An 858-amino-acid chain; its full sequence is Leucine--tRNA ligase (858 aa).

A 'HIGH' region motif is present at residues 42–52 (PYPSGRLHMGH). Positions 618-622 (KMSKS) match the 'KMSKS' region motif. Lys-621 is an ATP binding site.

Belongs to the class-I aminoacyl-tRNA synthetase family.

It is found in the cytoplasm. It carries out the reaction tRNA(Leu) + L-leucine + ATP = L-leucyl-tRNA(Leu) + AMP + diphosphate. This chain is Leucine--tRNA ligase, found in Aliivibrio fischeri (strain MJ11) (Vibrio fischeri).